Here is a 300-residue protein sequence, read N- to C-terminus: Probable protein phosphatase 2C 3 (300 aa).

Residues 23–298 (IFAASEMQGW…DNMTTILVYL (276 aa)) form the PPM-type phosphatase domain. Mn(2+) contacts are provided by aspartate 57, glycine 58, aspartate 237, and aspartate 289.

Belongs to the PP2C family. Requires Mg(2+) as cofactor. Mn(2+) serves as cofactor.

The protein resides in the membrane. The catalysed reaction is O-phospho-L-seryl-[protein] + H2O = L-seryl-[protein] + phosphate. The enzyme catalyses O-phospho-L-threonyl-[protein] + H2O = L-threonyl-[protein] + phosphate. Functionally, enzyme with a broad specificity. In Paramecium tetraurelia, this protein is Probable protein phosphatase 2C 3.